The following is a 408-amino-acid chain: Transmembrane protein 237 (408 aa).

A compositionally biased stretch (basic and acidic residues) spans 1 to 14 (MRTDSGARLEEGHL). The segment at 1–137 (MRTDSGARLE…RRKTKKTQPA (137 aa)) is disordered. Phosphoserine is present on residues Ser25 and Ser49. Basic and acidic residues predominate over residues 60–77 (RPSEGNEPSTKELKEHPE). Residues 95-106 (TSSTQKKSSSSS) are compositionally biased toward low complexity. The next 4 helical transmembrane spans lie at 227–247 (MIGL…IVVI), 268–288 (LAYP…ISAF), 303–323 (FLAL…LILS), and 358–378 (WIVV…FLSY).

Belongs to the TMEM237 family. In terms of assembly, part of the tectonic-like complex (also named B9 complex). Interacts with TMEM107.

It localises to the membrane. The protein localises to the cell projection. The protein resides in the cilium. Component of the transition zone in primary cilia. Required for ciliogenesis. The sequence is that of Transmembrane protein 237 (TMEM237) from Homo sapiens (Human).